The chain runs to 459 residues: Pentatricopeptide repeat-containing protein At1g07740, mitochondrial (459 aa).

Residues 1–20 (MRRRLSSVLINNQCIASQRH) constitute a mitochondrion transit peptide. The disordered stretch occupies residues 19–41 (RHYHTSRPEKPTKKASSHEPTHK). Residues 24–41 (SRPEKPTKKASSHEPTHK) are compositionally biased toward basic and acidic residues. 10 PPR repeats span residues 80–114 (DYPS…NVRC), 115–149 (RESL…DCVR), 150–184 (TIQS…RLRP), 185–219 (NSVS…EVQP), 220–254 (SVVT…RIRP), 255–289 (NAVT…GCKP), 290–324 (GLVN…RIKP), 325–359 (DVVI…GCKP), 360–394 (NAAT…RHCP), and 395–429 (TPAT…NLSF).

It belongs to the PPR family. P subfamily.

The protein localises to the mitochondrion. The polypeptide is Pentatricopeptide repeat-containing protein At1g07740, mitochondrial (Arabidopsis thaliana (Mouse-ear cress)).